Reading from the N-terminus, the 78-residue chain is Large ribosomal subunit protein bL28 (78 aa).

A disordered region spans residues 1 to 31 (MAAHCQVTGAEPGFGHSISHSHRRNKRRFDP).

The protein belongs to the bacterial ribosomal protein bL28 family.

The chain is Large ribosomal subunit protein bL28 from Paenarthrobacter aurescens (strain TC1).